Consider the following 376-residue polypeptide: Actin, cytoplasmic (376 aa).

It belongs to the actin family.

The protein localises to the cytoplasm. It localises to the cytoskeleton. It catalyses the reaction ATP + H2O = ADP + phosphate + H(+). Functionally, actins are highly conserved proteins that are involved in various types of cell motility and are ubiquitously expressed in all eukaryotic cells. This Tetrahymena pyriformis protein is Actin, cytoplasmic.